The primary structure comprises 258 residues: Proteasome subunit beta type-1 (258 aa).

The protein belongs to the peptidase T1B family. As to quaternary structure, the 26S proteasome consists of a 20S proteasome core and two 19S regulatory subunits. The 20S proteasome core is composed of 28 subunits that are arranged in four stacked rings, resulting in a barrel-shaped structure. The two end rings are each formed by seven alpha subunits, and the two central rings are each formed by seven beta subunits. The catalytic chamber with the active sites is on the inside of the barrel.

It localises to the cytoplasm. The protein resides in the nucleus. Non-catalytic component of the proteasome, a multicatalytic proteinase complex which is characterized by its ability to cleave peptides with Arg, Phe, Tyr, Leu, and Glu adjacent to the leaving group at neutral or slightly basic pH. The proteasome has an ATP-dependent proteolytic activity. The polypeptide is Proteasome subunit beta type-1 (pbs-6) (Caenorhabditis elegans).